A 288-amino-acid chain; its full sequence is Acetyl-coenzyme A carboxylase carboxyl transferase subunit beta (288 aa).

A CoA carboxyltransferase N-terminal domain is found at 32–288 (LLLICPKCKK…ILMLHNVEAR (257 aa)). Residues C36, C39, C55, and C58 each contribute to the Zn(2+) site. The segment at 36–58 (CPKCKKTLLKSELADNLDVCREC) adopts a C4-type zinc-finger fold.

It belongs to the AccD/PCCB family. As to quaternary structure, acetyl-CoA carboxylase is a heterohexamer composed of biotin carboxyl carrier protein (AccB), biotin carboxylase (AccC) and two subunits each of ACCase subunit alpha (AccA) and ACCase subunit beta (AccD). It depends on Zn(2+) as a cofactor.

It is found in the cytoplasm. The enzyme catalyses N(6)-carboxybiotinyl-L-lysyl-[protein] + acetyl-CoA = N(6)-biotinyl-L-lysyl-[protein] + malonyl-CoA. The protein operates within lipid metabolism; malonyl-CoA biosynthesis; malonyl-CoA from acetyl-CoA: step 1/1. In terms of biological role, component of the acetyl coenzyme A carboxylase (ACC) complex. Biotin carboxylase (BC) catalyzes the carboxylation of biotin on its carrier protein (BCCP) and then the CO(2) group is transferred by the transcarboxylase to acetyl-CoA to form malonyl-CoA. This chain is Acetyl-coenzyme A carboxylase carboxyl transferase subunit beta, found in Ruminiclostridium cellulolyticum (strain ATCC 35319 / DSM 5812 / JCM 6584 / H10) (Clostridium cellulolyticum).